The following is a 275-amino-acid chain: MSITPSNQNITSLLKKESILNALERGIRLDGRKNSDYRPISVTLNYAKKAEGSALVKLGDTMVLAGVKLEEEEPFPDTPNQGNLVVNVELLPLAYETFEPGPPDENAIELARVVDRSLRDSKAVDLSKLVIIPGKKVWTAWVDVYVLDYGGNVLDACTLAAVAALYNTKLPKVEIEGDNVKIIKEEKTDVTPIAYPVVTVTVAKIGKYLVVDPSLDEESIADVKISFSYVQDGRIVGMQKSNFGSLSLQEVDVAESLARSASQKLFEELKKQINM.

It belongs to the RNase PH family. Rrp42 subfamily. Component of the archaeal exosome complex. Forms a hexameric ring-like arrangement composed of 3 Rrp41-Rrp42 heterodimers. The hexameric ring associates with a trimer of Rrp4 and/or Csl4 subunits.

The protein resides in the cytoplasm. Non-catalytic component of the exosome, which is a complex involved in RNA degradation. Contributes to the structuring of the Rrp41 active site. This is Exosome complex component Rrp42 from Sulfurisphaera tokodaii (strain DSM 16993 / JCM 10545 / NBRC 100140 / 7) (Sulfolobus tokodaii).